Here is a 673-residue protein sequence, read N- to C-terminus: Protein kinase C delta type (673 aa).

Residues 1–106 (MAPFLRISFN…KNNGKAEFWL (106 aa)) form the C2 domain. A phosphothreonine mark is found at Thr43 and Thr50. Tyr64 is modified (phosphotyrosine). A Phosphoserine modification is found at Ser130. Thr141 bears the Phosphothreonine mark. At Tyr155 the chain carries Phosphotyrosine. The Phorbol-ester/DAG-type 1 zinc-finger motif lies at 158 to 208 (NHEFIATFFGQPTFCSVCKEFVWGLNKQGYKCRQCNAAIHKKCIDKIIGRC). Thr218 carries the phosphothreonine modification. Residues 230–280 (PHRFKVYNYMSPTFCDHCGTLLWGLVKQGLKCEDCGMNVHHKCREKVANLC) form a Phorbol-ester/DAG-type 2 zinc finger. Ser299 carries the phosphoserine; by autocatalysis modification. Phosphotyrosine; by SRC occurs at positions 311 and 332. Residues 347-601 (FTFQKVLGKG…TGNIRLHPFF (255 aa)) form the Protein kinase domain. 353-361 (LGKGSFGKV) is a binding site for ATP. Tyr372 is subject to Phosphotyrosine. Lys376 provides a ligand contact to ATP. Thr449 is subject to Phosphothreonine. Asp471 serves as the catalytic Proton acceptor. Ser504 bears the Phosphoserine mark. At Thr505 the chain carries Phosphothreonine; by autocatalysis. Tyr565 is subject to Phosphotyrosine. The region spanning 602–673 (KTINWNLLEK…VNPKYEQFLE (72 aa)) is the AGC-kinase C-terminal domain. Phosphoserine occurs at positions 643, 652, and 662.

Belongs to the protein kinase superfamily. AGC Ser/Thr protein kinase family. PKC subfamily. In terms of assembly, interacts with PDPK1 (via N-terminal region). Interacts with RAD9A. Interacts with CDCP1. Interacts with MUC1. Interacts with VASP. Interacts with CAVIN3. Interacts with PRKD2 (via N-terminus and zing-finger domain 1 and 2) in response to oxidative stress; the interaction is independent of PRKD2 tyrosine phosphorylation. Interacts with PLSC3; interaction is enhanced by UV irradiation. Post-translationally, autophosphorylated and/or phosphorylated at Thr-505, within the activation loop; phosphorylation at Thr-505 is not a prerequisite for enzymatic activity. Autophosphorylated at Ser-299. Upon TNFSF10/TRAIL treatment, phosphorylated at Tyr-155; phosphorylation is required for its translocation to the endoplasmic reticulum and cleavage by caspase-3. Phosphorylated at Tyr-311, Tyr-332 and Tyr-565; phosphorylation of Tyr-311 and Tyr-565 following thrombin or zymosan stimulation potentiates its kinase activity. Phosphorylated by protein kinase PDPK1; phosphorylation is inhibited by the apoptotic C-terminal cleavage product of PKN2. Phosphorylated at Tyr-311 and Tyr-332 by SRC; phosphorylation leads to enhanced autophosphorylation at Thr-505. Phosphorylated at Tyr-311 through a SYK and SRC mechanism downstream of C-type lectin receptors activation, promoting its activation. Proteolytically cleaved into a catalytic subunit and a regulatory subunit by caspase-3 during apoptosis which results in kinase activation.

Its subcellular location is the cytoplasm. The protein localises to the nucleus. The protein resides in the perinuclear region. It is found in the cell membrane. It localises to the mitochondrion. Its subcellular location is the endomembrane system. It carries out the reaction L-seryl-[protein] + ATP = O-phospho-L-seryl-[protein] + ADP + H(+). It catalyses the reaction L-threonyl-[protein] + ATP = O-phospho-L-threonyl-[protein] + ADP + H(+). The enzyme catalyses L-tyrosyl-[protein] + ATP = O-phospho-L-tyrosyl-[protein] + ADP + H(+). Its activity is regulated as follows. Novel PKCs (PRKCD, PRKCE, PRKCH and PRKCQ) are calcium-insensitive, but activated by diacylglycerol (DAG) and phosphatidylserine. Three specific sites; Thr-505 (activation loop of the kinase domain), Ser-643 (turn motif) and Ser-662 (hydrophobic region), need to be phosphorylated for its full activation. Activated by caspase-3 (CASP3) cleavage during apoptosis. After cleavage, the pseudosubstrate motif in the regulatory subunit is released from the substrate recognition site of the catalytic subunit, which enables PRKCD to become constitutively activated. The catalytic subunit which displays properties of a sphingosine-dependent protein kinase is activated by D-erythro-sphingosine (Sph) or N,N-dimethyl-D-erythrosphingosine (DMS) or N,N,N-trimethyl-D-erythrosphingosine (TMS), but not by ceramide or Sph-1-P and is strongly inhibited by phosphatidylserine. Calcium-independent, phospholipid- and diacylglycerol (DAG)-dependent serine/threonine-protein kinase that plays contrasting roles in cell death and cell survival by functioning as a pro-apoptotic protein during DNA damage-induced apoptosis, but acting as an anti-apoptotic protein during cytokine receptor-initiated cell death, is involved in tumor suppression, is required for oxygen radical production by NADPH oxidase and acts as a positive or negative regulator in platelet functional responses. Upon DNA damage, activates the promoter of the death-promoting transcription factor BCLAF1/Btf to trigger BCLAF1-mediated p53/TP53 gene transcription and apoptosis. In response to oxidative stress, interact with and activate CHUK/IKKA in the nucleus, causing the phosphorylation of p53/TP53. In the case of ER stress or DNA damage-induced apoptosis, can form a complex with the tyrosine-protein kinase ABL1 which trigger apoptosis independently of p53/TP53. In cytosol can trigger apoptosis by activating MAPK11 or MAPK14, inhibiting AKT1 and decreasing the level of X-linked inhibitor of apoptosis protein (XIAP), whereas in nucleus induces apoptosis via the activation of MAPK8 or MAPK9. Upon ionizing radiation treatment, is required for the activation of the apoptosis regulators BAX and BAK, which trigger the mitochondrial cell death pathway. Can phosphorylate MCL1 and target it for degradation which is sufficient to trigger for BAX activation and apoptosis. Is required for the control of cell cycle progression both at G1/S and G2/M phases. Mediates phorbol 12-myristate 13-acetate (PMA)-induced inhibition of cell cycle progression at G1/S phase by up-regulating the CDK inhibitor CDKN1A/p21 and inhibiting the cyclin CCNA2 promoter activity. In response to UV irradiation can phosphorylate CDK1, which is important for the G2/M DNA damage checkpoint activation. Can protect glioma cells from the apoptosis induced by TNFSF10/TRAIL, probably by inducing increased phosphorylation and subsequent activation of AKT1. Can also act as tumor suppressor upon mitogenic stimulation with PMA or TPA. In N-formyl-methionyl-leucyl-phenylalanine (fMLP)-treated cells, is required for NCF1 (p47-phox) phosphorylation and activation of NADPH oxidase activity, and regulates TNF-elicited superoxide anion production in neutrophils, by direct phosphorylation and activation of NCF1 or indirectly through MAPK1/3 (ERK1/2) signaling pathways. Involved in antifungal immunity by mediating phosphorylation and activation of CARD9 downstream of C-type lectin receptors activation, promoting interaction between CARD9 and BCL10, followed by activation of NF-kappa-B and MAP kinase p38 pathways. May also play a role in the regulation of NADPH oxidase activity in eosinophil after stimulation with IL5, leukotriene B4 or PMA. In collagen-induced platelet aggregation, acts a negative regulator of filopodia formation and actin polymerization by interacting with and negatively regulating VASP phosphorylation. Downstream of PAR1, PAR4 and CD36/GP4 receptors, regulates differentially platelet dense granule secretion; acts as a positive regulator in PAR-mediated granule secretion, whereas it negatively regulates CD36/GP4-mediated granule release. Phosphorylates MUC1 in the C-terminal and regulates the interaction between MUC1 and beta-catenin. The catalytic subunit phosphorylates 14-3-3 proteins (YWHAB, YWHAZ and YWHAH) in a sphingosine-dependent fashion. Phosphorylates ELAVL1 in response to angiotensin-2 treatment. Phosphorylates mitochondrial phospholipid scramblase 3 (PLSCR3), resulting in increased cardiolipin expression on the mitochondrial outer membrane which facilitates apoptosis. Phosphorylates SMPD1 which induces SMPD1 secretion. Functionally, truncated isoform 2 is inactive. The polypeptide is Protein kinase C delta type (Rattus norvegicus (Rat)).